The primary structure comprises 422 residues: Lactoyl-CoA dehydratase subunit alpha (422 aa).

This sequence belongs to the FldB/FldC dehydratase alpha/beta subunit family. In terms of assembly, heterodimer of an alpha (LcdA) and a beta (LcdB) subunit. [4Fe-4S] cluster is required as a cofactor. The cofactor is FMN. It depends on riboflavin as a cofactor. Mg(2+) serves as cofactor.

It catalyses the reaction (R)-lactoyl-CoA = acryloyl-CoA + H2O. The enzyme catalyses (2R)-hydroxybutanoyl-CoA = (2E)-butenoyl-CoA + H2O. Activated by the LcdC protein. Involved in the acrylate pathway for the conversion of D-lactic acid to propionic acid. Catalyzes the reversible dehydration of Lactoyl-CoA and 2-hydroxybutyroyl-CoA to acryloyl-CoA and crotonyl-CoA, respectively. In Anaerotignum propionicum (Clostridium propionicum), this protein is Lactoyl-CoA dehydratase subunit alpha (lcdA).